The chain runs to 601 residues: Chaperone protein DnaK (601 aa).

A Phosphothreonine; by autocatalysis modification is found at threonine 175. The segment at 570–601 (FAQKAASKETSKNEQNEDGSIDAEIKEEDPKA) is disordered. Residues 575–584 (ASKETSKNEQ) show a composition bias toward basic and acidic residues. Positions 585–601 (NEDGSIDAEIKEEDPKA) are enriched in acidic residues.

Belongs to the heat shock protein 70 family.

Functionally, acts as a chaperone. The chain is Chaperone protein DnaK from Mycoplasma mobile (strain ATCC 43663 / 163K / NCTC 11711) (Mesomycoplasma mobile).